The sequence spans 449 residues: Tubulin beta chain (449 aa).

Gln-11, Glu-69, Ser-138, Gly-142, Thr-143, Gly-144, Asn-204, and Asn-226 together coordinate GTP. Glu-69 is a binding site for Mg(2+). A disordered region spans residues 426 to 449 (QDATAEEEGEFDEEEGEMGAEEGA). The segment covering 429–449 (TAEEEGEFDEEEGEMGAEEGA) has biased composition (acidic residues).

Belongs to the tubulin family. In terms of assembly, dimer of alpha and beta chains. A typical microtubule is a hollow water-filled tube with an outer diameter of 25 nm and an inner diameter of 15 nM. Alpha-beta heterodimers associate head-to-tail to form protofilaments running lengthwise along the microtubule wall with the beta-tubulin subunit facing the microtubule plus end conferring a structural polarity. Microtubules usually have 13 protofilaments but different protofilament numbers can be found in some organisms and specialized cells. Requires Mg(2+) as cofactor.

The protein localises to the cytoplasm. The protein resides in the cytoskeleton. In terms of biological role, tubulin is the major constituent of microtubules, a cylinder consisting of laterally associated linear protofilaments composed of alpha- and beta-tubulin heterodimers. Microtubules grow by the addition of GTP-tubulin dimers to the microtubule end, where a stabilizing cap forms. Below the cap, tubulin dimers are in GDP-bound state, owing to GTPase activity of alpha-tubulin. In Toxoplasma gondii, this protein is Tubulin beta chain.